The sequence spans 499 residues: Lysine--tRNA ligase (499 aa).

Mg(2+)-binding residues include glutamate 408 and glutamate 415.

Belongs to the class-II aminoacyl-tRNA synthetase family. As to quaternary structure, homodimer. The cofactor is Mg(2+).

It localises to the cytoplasm. It catalyses the reaction tRNA(Lys) + L-lysine + ATP = L-lysyl-tRNA(Lys) + AMP + diphosphate. In Thermoanaerobacter pseudethanolicus (strain ATCC 33223 / 39E) (Clostridium thermohydrosulfuricum), this protein is Lysine--tRNA ligase.